Here is a 352-residue protein sequence, read N- to C-terminus: Photosystem II D2 protein (352 aa).

The residue at position 2 (T2) is an N-acetylthreonine. The residue at position 2 (T2) is a Phosphothreonine. The chain crosses the membrane as a helical span at residues 40-60; sequence CAYFALGGWLTGTTFVSSWYT. H117 contacts chlorophyll a. Residues 124-140 traverse the membrane as a helical segment; it reads GFMLRQFEIARAVQIRP. Pheophytin a is bound by residues Q129 and N142. The chain crosses the membrane as a helical span at residues 152–165; sequence VFVSVFLIYPLGQS. H197 provides a ligand contact to chlorophyll a. A helical membrane pass occupies residues 207-227; sequence AALLCAIHGATVENTLFEDGD. A plastoquinone is bound by residues H214 and F261. Residue H214 participates in Fe cation binding. Fe cation is bound at residue H268. A helical transmembrane segment spans residues 278-294; the sequence is GLWMSALGVVGLALNLR.

Belongs to the reaction center PufL/M/PsbA/D family. PSII is composed of 1 copy each of membrane proteins PsbA, PsbB, PsbC, PsbD, PsbE, PsbF, PsbH, PsbI, PsbJ, PsbK, PsbL, PsbM, PsbT, PsbX, PsbY, PsbZ, Psb30/Ycf12, at least 3 peripheral proteins of the oxygen-evolving complex and a large number of cofactors. It forms dimeric complexes. It depends on The D1/D2 heterodimer binds P680, chlorophylls that are the primary electron donor of PSII, and subsequent electron acceptors. It shares a non-heme iron and each subunit binds pheophytin, quinone, additional chlorophylls, carotenoids and lipids. There is also a Cl(-1) ion associated with D1 and D2, which is required for oxygen evolution. The PSII complex binds additional chlorophylls, carotenoids and specific lipids. as a cofactor.

Its subcellular location is the plastid. It localises to the chloroplast thylakoid membrane. It carries out the reaction 2 a plastoquinone + 4 hnu + 2 H2O = 2 a plastoquinol + O2. Its function is as follows. Photosystem II (PSII) is a light-driven water:plastoquinone oxidoreductase that uses light energy to abstract electrons from H(2)O, generating O(2) and a proton gradient subsequently used for ATP formation. It consists of a core antenna complex that captures photons, and an electron transfer chain that converts photonic excitation into a charge separation. The D1/D2 (PsbA/PsbD) reaction center heterodimer binds P680, the primary electron donor of PSII as well as several subsequent electron acceptors. D2 is needed for assembly of a stable PSII complex. In Ostreococcus tauri, this protein is Photosystem II D2 protein.